The primary structure comprises 436 residues: UDP-N-acetylmuramate--L-alanine ligase (436 aa).

108 to 114 (GAHGKTS) is a binding site for ATP.

This sequence belongs to the MurCDEF family.

The protein resides in the cytoplasm. It catalyses the reaction UDP-N-acetyl-alpha-D-muramate + L-alanine + ATP = UDP-N-acetyl-alpha-D-muramoyl-L-alanine + ADP + phosphate + H(+). The protein operates within cell wall biogenesis; peptidoglycan biosynthesis. Functionally, cell wall formation. This chain is UDP-N-acetylmuramate--L-alanine ligase, found in Bacillus cytotoxicus (strain DSM 22905 / CIP 110041 / 391-98 / NVH 391-98).